The following is a 210-amino-acid chain: Phosphoheptose isomerase (210 aa).

The region spanning Ile38–Leu202 is the SIS domain. A substrate-binding site is contributed by Asn53–Gly55. 2 residues coordinate Zn(2+): His62 and Glu66. Residues Glu66, Asn95–Asp96, Ser121–Ser123, Ser126, and Gln173 each bind substrate. Residues Gln173 and His181 each coordinate Zn(2+).

It belongs to the SIS family. GmhA subfamily. Homotetramer. Zn(2+) serves as cofactor.

It is found in the cytoplasm. It carries out the reaction 2 D-sedoheptulose 7-phosphate = D-glycero-alpha-D-manno-heptose 7-phosphate + D-glycero-beta-D-manno-heptose 7-phosphate. It functions in the pathway carbohydrate biosynthesis; D-glycero-D-manno-heptose 7-phosphate biosynthesis; D-glycero-alpha-D-manno-heptose 7-phosphate and D-glycero-beta-D-manno-heptose 7-phosphate from sedoheptulose 7-phosphate: step 1/1. In terms of biological role, catalyzes the isomerization of sedoheptulose 7-phosphate in D-glycero-D-manno-heptose 7-phosphate. This Desulfovibrio desulfuricans (strain ATCC 27774 / DSM 6949 / MB) protein is Phosphoheptose isomerase.